The chain runs to 270 residues: 2-aminoethanethiol dioxygenase (270 aa).

The disordered stretch occupies residues 21-48; sequence FRGSGGGRGASDRDAASGPEAPMQPGFP. Fe cation is bound by residues H112 and H114. Residues 140–164 form a disordered region; that stretch reads GGQRPRALPPEQQFEPPLQPREREA. H193 is a Fe cation binding site. A cross-link (3'-(S-cysteinyl)-tyrosine (Cys-Tyr)) is located at residues 220–223; that stretch reads CHYY.

As to quaternary structure, monomer. The cofactor is Fe cation.

The enzyme catalyses cysteamine + O2 = hypotaurine + H(+). It carries out the reaction N-terminal L-cysteinyl-[protein] + O2 = N-terminal S-hydroxy-S-oxy-L-cysteinyl-[protein] + H(+). Plays a vital role in regulating thiol metabolism and preserving oxygen homeostasis by oxidizing the sulfur of cysteamine and N-terminal cysteine-containing proteins to their corresponding sulfinic acids using O2 as a cosubstrate. Catalyzes the oxidation of cysteamine (2-aminoethanethiol) to hypotaurine. Catalyzes the oxidation of regulators of G-protein signaling 4 (RGS4) and 5 (RGS5) and interleukin-32 (IL32). This Homo sapiens (Human) protein is 2-aminoethanethiol dioxygenase (ADO).